The following is a 521-amino-acid chain: MGNSLPVESKFTFEEENDRIKYVVSSMQGWGEKMEDAHAAILNLDDATSTSFFGVYDGHGGAEVALYCAKQFHIELCNHEDYHNDLINALDNVFLSMDENLQQSDAWRELVIPHDNGCMYFLKAGVCAKPFPQATYTGPAYEGSTACVVVIRGNQMIVGHVGDSRCVLSRQGGLAIDLSFDHKPCTRTESERERVQNAGGRSLGLRCEQVMGNYVVKEQWVLGDFGGGVTISRSIGDFAFKKNKDLDREKQMLVCDPDILADDITDDMEFLVIASQGLWSCVDSADVVSYIHDRLSVEGAELRVICEEVVEFGLASGENTTVILVQFKPGAFQYQLVDPAGFGTAVSNIASTSAAPAGASDTSDEGVMADSCATADTSGSARAESGELVPTPSANNTVTDEVDPTGTVAADDKVDPNSSANADADDGAPKPSLGAVIESDEVALDATATGHQVAVRQQEEFDPKKCWICGKGYKKILLEPSSARARNPLLAHAKTCESEDKKAKKKITKYMMKANVTNQYH.

Residues 21-327 (KYVVSSMQGW…ENTTVILVQF (307 aa)) form the PPM-type phosphatase domain. Mn(2+)-binding residues include Asp-57, Gly-58, Gln-276, and Glu-318. The tract at residues 354–431 (AAPAGASDTS…ADADDGAPKP (78 aa)) is disordered.

This sequence belongs to the PP2C family. It depends on Mg(2+) as a cofactor. Mn(2+) is required as a cofactor.

It catalyses the reaction O-phospho-L-seryl-[protein] + H2O = L-seryl-[protein] + phosphate. It carries out the reaction O-phospho-L-threonyl-[protein] + H2O = L-threonyl-[protein] + phosphate. The polypeptide is Probable protein phosphatase 2C 16 (Oryza sativa subsp. japonica (Rice)).